We begin with the raw amino-acid sequence, 133 residues long: Fluoride-specific ion channel FluC 4 (133 aa).

The next 3 helical transmembrane spans lie at 7-27 (ILVLVGGFIGGVMRFFLSGYV), 37-57 (WGTFVVNVSGAFVIGTAAGLG), and 60-80 (LGGIFSTTIFHEFIMVGLLGG). Na(+)-binding residues include Gly79 and Thr82. A helical transmembrane segment spans residues 107 to 127 (IVASALLCVLAVAAGYGGIMW).

The protein belongs to the fluoride channel Fluc/FEX (TC 1.A.43) family.

Its subcellular location is the cell inner membrane. The catalysed reaction is fluoride(in) = fluoride(out). With respect to regulation, na(+) is not transported, but it plays an essential structural role and its presence is essential for fluoride channel function. Fluoride-specific ion channel. Important for reducing fluoride concentration in the cell, thus reducing its toxicity. This is Fluoride-specific ion channel FluC 4 from Brucella abortus biovar 1 (strain 9-941).